The following is a 158-amino-acid chain: Anti-tumor lectin (158 aa).

Position 1 is a blocked amino end (Gln) (Q1). Positions 12-155 (TSVDLAAPVT…STVVEAVTYT (144 aa)) constitute a Galectin domain. N43, H59, R63, N72, R74, W80, and E83 together coordinate N-acetyl-alpha-neuraminyl-(2-&gt;3)-beta-D-galactosyl-(1-&gt;4)-beta-D-glucose.

As to quaternary structure, homodimer. Detected in the fruiting body.

Functionally, anti-tumor lectin with DNase activity. Inhibits the growth of several tumor cell lines in vitro. Induces lymphocyte infiltration and necrosis of tumor cells in a mouse tumor model. Induces apoptosis in HeLa cells. Binds N-acetylneuraminyl lactose (N-acetyl-alpha-neuraminyl-(2-&gt;3)-beta-D-galactosyl-(1-&gt;4)-beta-D-glucose). The chain is Anti-tumor lectin from Cyclocybe aegerita (Black poplar mushroom).